The following is a 137-amino-acid chain: Large ribosomal subunit protein uL16 (137 aa).

This sequence belongs to the universal ribosomal protein uL16 family. As to quaternary structure, part of the 50S ribosomal subunit.

Binds 23S rRNA and is also seen to make contacts with the A and possibly P site tRNAs. The protein is Large ribosomal subunit protein uL16 of Nitratidesulfovibrio vulgaris (strain DSM 19637 / Miyazaki F) (Desulfovibrio vulgaris).